We begin with the raw amino-acid sequence, 332 residues long: Fructose-1,6-bisphosphatase class 1 (332 aa).

Mg(2+)-binding residues include Glu89, Asp110, Leu112, and Asp113. Substrate contacts are provided by residues 113–116 (DGSS), Asn206, Tyr239, 257–259 (YLY), and Lys269. A Mg(2+)-binding site is contributed by Glu275.

It belongs to the FBPase class 1 family. In terms of assembly, homotetramer. Requires Mg(2+) as cofactor.

The protein localises to the cytoplasm. It catalyses the reaction beta-D-fructose 1,6-bisphosphate + H2O = beta-D-fructose 6-phosphate + phosphate. The protein operates within carbohydrate biosynthesis; gluconeogenesis. This chain is Fructose-1,6-bisphosphatase class 1, found in Cronobacter sakazakii (strain ATCC BAA-894) (Enterobacter sakazakii).